A 617-amino-acid chain; its full sequence is MADSQNGKSAFFFFFVSLILLFLSPSYSDVTASESDPIPYENSDASPGVVTSSESDRQGVSLHRLEELVRNLTELVARLDAKLSETPFKVKKEITRDEIEEKAKAFSVTKYSPFWSERFEFTSAVKLDSEATCINVLPFRDHEGLSKYFAVGDSSGRVFVFLRNGDVLVEFFTTCDSPITAMVSYMSVYKNESFVVTGHQSGVILLHRLREGSIGEDLNSAVMENVGKFDGTEDGLQVTLLEVHHVGRVRYILATDLSGKLTVFTENRTVYGSVSPTSRPLVFLKQRLLFLTETGAGSLDLRSMKIRESECEGLNHSLARSYVFDASERAKAYGFTSEGEIIHVLLLGDIMNFKCRVRSKKKVQMEEPVALQAIKGYLLIVNQEKVFVYNVSTQHYVRTTGPRLLFPAALEDIRSTFLSHRESTKTTDHQKLEKVTPLIASDREKLLVMGLGDGYVATYKSKLPISKAEFNTMLWSSPVFFFILFLFGAWHFFSKKKESLTAWGPDDPFSSTTMSSSSTTTAQNSSAFSESTRRNDDHMDLRRRYVSPSRYPPGAATGAYRSVGSNDPSSRAPVETTNYRTTAQEMKYRGGSGLDSGGFGKRRESLFGNNKALDDES.

The helical transmembrane segment at 10–30 (AFFFFFVSLILLFLSPSYSDV) threads the bilayer. Positions 34–58 (ESDPIPYENSDASPGVVTSSESDRQ) are disordered. The segment covering 43 to 53 (SDASPGVVTSS) has biased composition (polar residues). Positions 60-86 (VSLHRLEELVRNLTELVARLDAKLSET) form a coiled coil. A helical membrane pass occupies residues 473–493 (MLWSSPVFFFILFLFGAWHFF). A compositionally biased stretch (low complexity) spans 511-529 (STTMSSSSTTTAQNSSAFS). The segment at 511 to 617 (STTMSSSSTT…GNNKALDDES (107 aa)) is disordered. Over residues 531–543 (STRRNDDHMDLRR) the composition is skewed to basic and acidic residues. A compositionally biased stretch (polar residues) spans 563-584 (VGSNDPSSRAPVETTNYRTTAQ). The span at 590 to 599 (GGSGLDSGGF) shows a compositional bias: gly residues.

It localises to the membrane. This is an uncharacterized protein from Arabidopsis thaliana (Mouse-ear cress).